Reading from the N-terminus, the 469-residue chain is Pancreatic lipase-related protein 2 (469 aa).

Residues methionine 1–glycine 17 form the signal peptide. The cysteines at positions 21 and 27 are disulfide-linked. The interval isoleucine 93 to proline 105 is required for galactolipase activity. Cysteine 109 and cysteine 120 are oxidised to a cystine. The active-site Nucleophile is the serine 171. The active-site Charge relay system is the aspartate 195. Ca(2+) contacts are provided by glutamate 206, arginine 209, aspartate 211, and aspartate 214. An intrachain disulfide couples cysteine 256 to cysteine 280. The interval lysine 257–serine 279 is required for galactolipase activity. Histidine 282 (charge relay system) is an active-site residue. 2 cysteine pairs are disulfide-bonded: cysteine 304–cysteine 315 and cysteine 318–cysteine 323. 2 N-linked (GlcNAc...) asparagine glycosylation sites follow: asparagine 353 and asparagine 428. Residues tryptophan 357 to cysteine 469 enclose the PLAT domain. A disulfide bond links cysteine 453 and cysteine 469.

The protein belongs to the AB hydrolase superfamily. Lipase family. In terms of tissue distribution, pancreas.

It localises to the secreted. The protein localises to the zymogen granule membrane. Its subcellular location is the cell projection. The protein resides in the neuron projection. The catalysed reaction is a triacylglycerol + H2O = a diacylglycerol + a fatty acid + H(+). It catalyses the reaction a 1,2-diacyl-3-O-(beta-D-galactosyl)-sn-glycerol + 2 H2O = 3-beta-D-galactosyl-sn-glycerol + 2 a fatty acid + 2 H(+). It carries out the reaction 1,2,3-tri-(9Z-octadecenoyl)-glycerol + H2O = di-(9Z)-octadecenoylglycerol + (9Z)-octadecenoate + H(+). The enzyme catalyses di-(9Z)-octadecenoylglycerol + H2O = (9Z-octadecenoyl)-glycerol + (9Z)-octadecenoate + H(+). The catalysed reaction is (9Z-octadecenoyl)-glycerol + H2O = glycerol + (9Z)-octadecenoate + H(+). It catalyses the reaction 1-(9Z-octadecenoyl)-glycerol + H2O = glycerol + (9Z)-octadecenoate + H(+). It carries out the reaction 1,2,3-tripropanoylglycerol + H2O = dipropanoylglycerol + propanoate + H(+). The enzyme catalyses 1,2,3-tributanoylglycerol + H2O = dibutanoylglycerol + butanoate + H(+). The catalysed reaction is 1,2,3-trioctanoylglycerol + H2O = dioctanoylglycerol + octanoate + H(+). It catalyses the reaction 1,2-didecanoylglycerol + H2O = decanoylglycerol + decanoate + H(+). It carries out the reaction long chain 1,2-diacyl-3-O-beta-D-galactosyl-sn-glycerol + H2O = long chain acyl-3-O-beta-D-galactosyl-sn-glycerol + a fatty acid + H(+). The enzyme catalyses 1,2-dioctanoyl-3-O-beta-D-galactosyl-sn-glycerol + H2O = octanoyl-3-(beta-D-galactosyl)-sn-glycerol + octanoate + H(+). The catalysed reaction is 1,2-didodecanoyl-3-beta-D-galactosyl-sn-glycerol + H2O = dodecanoyl-3-beta-D-galactosyl-sn-glycerol + dodecanoate + H(+). It catalyses the reaction 1-beta-D-galactosyl-2,3-didodecanoyl-sn-glycerol + H2O = 1-beta-D-galactosyl-dodecanoyl-sn-glycerol + dodecanoate + H(+). It carries out the reaction a 1,2-diacyl-3-O-[alpha-D-galactosyl-(1-&gt;6)-beta-D-galactosyl]-sn-glycerol + H2O = acyl-3-O-[alpha-D-galactosyl-(1-&gt;6)-beta-D-galactosyl]-sn-glycerol + a fatty acid + H(+). The enzyme catalyses long chain 1,2-diacyl-3-O-[alpha-D-galactosyl-(1-&gt;6)-beta-D-galactosyl]-sn-glycerol + H2O = long chain acyl-3-O-[alpha-D-galactosyl-(1-&gt;6)-beta-D-galactosyl]-sn-glycerol + a fatty acid + H(+). The catalysed reaction is 1,2-dioctanoyl-3-O-[alpha-D-galactosyl-(1-&gt;6)-beta-D-galactosyl]-sn-glycerol + H2O = octanoyl-3-O-[alpha-D-galactosyl-(1-&gt;6)-beta-D-galactosyl]-sn-glycerol + octanoate + H(+). It catalyses the reaction 1,2-didodecanoyl-3-O-[alpha-D-galactosyl-(1-&gt;6)-beta-D-galactosyl]-sn-glycerol + H2O = dodecanoyl-3-O-[alpha-D-galactosyl-(1-&gt;6)-beta-D-galactosyl]-sn-glycerol + dodecanoate + H(+). It carries out the reaction a 1,2-diacyl-sn-glycero-3-phosphocholine + H2O = a monoacyl-sn-glycero-3-phosphocholine + a fatty acid + H(+). The protein operates within glycerolipid metabolism; triacylglycerol degradation. It functions in the pathway glycolipid metabolism. With respect to regulation, regulated by CLPS and bile salts levels ranging 1-5 mM in neonates and 2-30 mM in healthy adults. CLPS stimulates milk fat digestion in the presence of 4 mM bile salts. Triacylglycerol lipase activity toward short- and medium-chain triglycerides is inhibited by increasing concentrations of bile salts and weakly reactivated by CLPS. Optimal triacylglycerol lipase activity is reached at bile salts concentrations ranging from 0.1 to 0.5 mM and then decreases at concentrations higher than 1 mM. Lipase activity toward long-chain glycerolipids is stimulated by CLPS in the presence of 4 mM bile salts. Galactolipase activity is inhibited at high concentrations of bile salts. Triacylglycerol lipase activity is inhibited by anti-obesity drug tetrahydrolipstatin. Lipase that primarily hydrolyzes triglycerides and galactosylglycerides. In neonates, may play a major role in pancreatic digestion of dietary fats such as milk fat globules enriched in long-chain triglycerides. Hydrolyzes short-, medium- and long-chain fatty acyls in triglycerides without apparent positional specificity. Can completely deacylate triacylglycerols. When the liver matures and bile salt synthesis increases, likely functions mainly as a galactolipase and monoacylglycerol lipase. Hydrolyzes monogalactosyldiglycerols (MGDG) and digalactosyldiacylglycerols (DGDG) present in a plant-based diet, releasing long-chain polyunsaturated fatty acids. Hydrolyzes medium- and long-chain fatty acyls in galactolipids. May act together with LIPF to hydrolyze partially digested triglycerides. Hydrolyzes long-chain monoglycerides with high efficiency. In cytotoxic T cells, contributes to perforin-dependent cell lysis, but is unlikely to mediate direct cytotoxicity. Also has low phospholipase activity. In neurons, required for the localization of the phospholipid 1-oleoyl-2-palmitoyl-PC (OPPC) to neurite tips through acyl chain remodeling of membrane phospholipids. The resulting OPPC-rich lipid membrane domain recruits the t-SNARE protein STX4 by selectively interacting with the STX4 transmembrane domain and this promotes surface expression of the dopamine transporter SLC6A3/DAT at neurite tips by facilitating fusion of SLC6A3-containing transport vesicles with the plasma membrane. The sequence is that of Pancreatic lipase-related protein 2 from Homo sapiens (Human).